The following is a 596-amino-acid chain: MVDIMCNDSTGVSLVKNIYPILDDLFSVFSSVDFVLQPTHTGILIIWIKREMVIPVLTFLKTTSKPYIMLYDLHGIDERLRIHREGLPESDFTVFYHLISILRNDDIIIKVPLLEQSLYIDTVVSVFANANWYERETWEMFGIHFNKHPNLTRIIMPKNWNGYPLRKEYPARATEFNPFILTKQKEDLAMEGLLFKPEEWGMHKHSKHENFMFLNLGPNHPSVHGVFRIILQLNGEEIIDCVPDIGYHHRGAEKMGERQTWHSYIPYTDRIEYLGGCVNEMPYILAVEKLAGITVPDRVKVIRIMLSELFRINSHLLYISTYLQDVGAMSPVFLAFTDRQKIYDVIESITGSRMHPAWFRIGGVAHDLPRGWECLLRKCLDWIPHRVSFYVKSTLENSIFKKRACGIGAYNAKDALDWGVTGAGLRATGIEFDIRKSRPYSGYENFDFDVPIGNGISDSYSRVMLKVEEIYQSVRILEQCLQNMPIGPFKSDHPLATPPMKEYALQHIETLITHFLQVSWGPVIPANESFQMIEATKGINSYYLISDGNTMSYRTRIRTPSFPHLQQIPHVIRGSLISDLIVYLGSIDFVMSDVDR.

Residues 1–186 form an NADH dehydrogenase I subunit C region; that stretch reads MVDIMCNDST…NPFILTKQKE (186 aa). An NADH dehydrogenase I subunit D region spans residues 210–596; the sequence is NFMFLNLGPN…IDFVMSDVDR (387 aa).

This sequence in the N-terminal section; belongs to the complex I 30 kDa subunit family. The protein in the C-terminal section; belongs to the complex I 49 kDa subunit family. NDH-1 is composed of 13 different subunits. Subunits NuoB, CD, E, F, and G constitute the peripheral sector of the complex.

It is found in the cell inner membrane. It carries out the reaction a quinone + NADH + 5 H(+)(in) = a quinol + NAD(+) + 4 H(+)(out). Functionally, NDH-1 shuttles electrons from NADH, via FMN and iron-sulfur (Fe-S) centers, to quinones in the respiratory chain. The immediate electron acceptor for the enzyme in this species is believed to be ubiquinone. Couples the redox reaction to proton translocation (for every two electrons transferred, four hydrogen ions are translocated across the cytoplasmic membrane), and thus conserves the redox energy in a proton gradient. This chain is NADH-quinone oxidoreductase subunit C/D, found in Blochmanniella pennsylvanica (strain BPEN).